The following is a 314-amino-acid chain: Large ribosomal subunit protein uL10 (314 aa).

The segment at 285–314 (GAAAGGAAAEEEKEEEEESDEEGGFGDLFG) is disordered. Acidic residues predominate over residues 293–308 (AEEEKEEEEESDEEGG). Position 303 is a phosphoserine; by CK1 (Ser-303).

Belongs to the universal ribosomal protein uL10 family. As to quaternary structure, component of the large ribosomal subunit. P0 forms a pentameric complex by interaction with dimers of P1 and P2. Phosphorylated.

Its function is as follows. Ribosomal protein P0 is the functional equivalent of E.coli protein L10. This chain is Large ribosomal subunit protein uL10, found in Podospora anserina (Pleurage anserina).